Reading from the N-terminus, the 1557-residue chain is ABC transporter atnG (1557 aa).

5 helical membrane-spanning segments follow: residues 27–47 (FTLY…LILA), 70–90 (LKLL…AFWM), 99–119 (LTIA…YLIH), 131–151 (IISI…RTIW), and 159–179 (VSAI…LETW). N-linked (GlcNAc...) asparagine glycans are attached at residues Asn202 and Asn249. 6 consecutive transmembrane segments (helical) span residues 256 to 276 (AGAM…AGVF), 311 to 331 (ATLL…ATAT), 385 to 405 (YIHD…LLYN), 412 to 432 (IAPI…AMMA), 490 to 510 (LLIA…IVSF), and 531 to 551 (LTSL…VESI). Residues 279–556 (LCQSGFIISQ…LVESISETAM (278 aa)) enclose the ABC transmembrane type-1 1 domain. The region spanning 593–829 (AFEVDVGWKN…LDYIQGFAIA (237 aa)) is the ABC transporter 1 domain. ATP is bound at residue 625–632 (GAVGCGKT). Asn667 carries an N-linked (GlcNAc...) asparagine glycan. Residues 882-902 (LVYFGLMAIFVFLQAFPTVWV) traverse the membrane as a helical segment. Residues 882–1162 (LVYFGLMAIF…LITDWTVLET (281 aa)) form the ABC transmembrane type-1 2 domain. The N-linked (GlcNAc...) asparagine glycan is linked to Asn916. 4 helical membrane passes run 921 to 941 (IGVY…TACF), 996 to 1016 (AVLQ…IIAV), 1020 to 1040 (YITA…TFYM), and 1105 to 1125 (LSLV…GIAV). The N-linked (GlcNAc...) asparagine glycan is linked to Asn1132. Residues 1135–1155 (SLGLALVNVVSLSASVKALIT) form a helical membrane-spanning segment. Residues 1199-1431 (VEYKNVSAFY…PSVFRELYKS (233 aa)) form the ABC transporter 2 domain. N-linked (GlcNAc...) asparagine glycosylation is found at Asn1203 and Asn1218. Residue 1233-1240 (GRSGSGKS) coordinates ATP. Disordered stretches follow at residues 1439–1464 (ERQE…EELR) and 1503–1557 (RTRS…RGLH). Residues 1507–1522 (RSRDHSAERRESKRYS) are compositionally biased toward basic and acidic residues.

Belongs to the ABC transporter superfamily. ABCC family. Conjugate transporter (TC 3.A.1.208) subfamily.

The protein resides in the cell membrane. Its function is as follows. ABC transporter; part of the gene cluster that mediates the biosynthesis of aspercryptins, linear lipopeptides built from six amino acids including 2 highly unusual and nonproteogenic amino acids, 2-amino-octanoic acid (2aoa) and 2-amino-dodecanol (2adol). This chain is ABC transporter atnG, found in Emericella nidulans (strain FGSC A4 / ATCC 38163 / CBS 112.46 / NRRL 194 / M139) (Aspergillus nidulans).